A 500-amino-acid chain; its full sequence is Glutamate decarboxylase (500 aa).

K277 bears the N6-(pyridoxal phosphate)lysine mark. The tract at residues 469 to 500 (VHKKTDSEVQLEMITAWKKFVEEKKKKTNRVC) is calmodulin-binding.

The protein belongs to the group II decarboxylase family. As to quaternary structure, homodimer. Pyridoxal 5'-phosphate serves as cofactor.

It carries out the reaction L-glutamate + H(+) = 4-aminobutanoate + CO2. In terms of biological role, catalyzes the production of GABA. The calmodulin-binding is calcium-dependent and it is proposed that this may, directly or indirectly, form a calcium regulated control of GABA biosynthesis. This Petunia hybrida (Petunia) protein is Glutamate decarboxylase (GAD).